The following is a 241-amino-acid chain: Ribonuclease HII (241 aa).

The 201-residue stretch at 27 to 227 (GPVAGVDEAG…REARSLRLED (201 aa)) folds into the RNase H type-2 domain. The a divalent metal cation site is built by D33, E34, and D128.

It belongs to the RNase HII family. Requires Mn(2+) as cofactor. Mg(2+) is required as a cofactor.

The protein localises to the cytoplasm. The catalysed reaction is Endonucleolytic cleavage to 5'-phosphomonoester.. Its function is as follows. Endonuclease that specifically degrades the RNA of RNA-DNA hybrids. This is Ribonuclease HII from Frankia alni (strain DSM 45986 / CECT 9034 / ACN14a).